The following is a 225-amino-acid chain: MMYHIPGVLSPQDVAHFREQLEQAEWVDGRVTTGAQGAQVKNNQQVDTRSALYAALQNEVLNAVNQHALFFAAALPRTLSTPLFNRYQNNETYGFHVDGAVRSHPQNGWMRTDLSATLFLSDPQSYDGGELVVNDTFGQHRVKLPAGDLVLYPSSSLHCVTPVTRGVRVASFMWIQSMIRDDKKRAMLFELDKNIQSLKSRYGENEEILSLLNLYHNLLREWSEI.

Residues Thr-78–Ser-177 enclose the Fe2OG dioxygenase domain. 3 residues coordinate Fe cation: His-96, Asp-98, and His-158. Arg-168 lines the 2-oxoglutarate pocket.

Fe(2+) serves as cofactor. Requires L-ascorbate as cofactor.

This is PKHD-type hydroxylase YbiX from Shigella flexneri serotype 5b (strain 8401).